We begin with the raw amino-acid sequence, 1331 residues long: Contactin-associated protein-like 2 (1331 aa).

The N-terminal stretch at 1 to 27 (MLAAPRAGCGAALLLWIVSSCLCRAWT) is a signal peptide. Residues 28–1262 (APSTSQKCDE…IRNGVNRNSA (1235 aa)) lie on the Extracellular side of the membrane. One can recognise an F5/8 type C domain in the interval 35-181 (CDEPLVSGLP…IGLRIEVYGC (147 aa)). Cys35 and Cys181 are disulfide-bonded. Laminin G-like domains lie at 187–368 (VINF…SFSC) and 373–552 (TVPV…IDMC). N-linked (GlcNAc...) asparagine glycans are attached at residues Asn289, Asn346, Asn363, Asn379, Asn436, Asn506, Asn507, and Asn546. Cys336 and Cys368 are joined by a disulfide. Cystine bridges form between Cys520/Cys552, Cys558/Cys569, Cys563/Cys578, and Cys580/Cys590. One can recognise an EGF-like 1 domain in the interval 554-591 (IIDRCVPNHCERGGKCSQTWDSFKCTCDETGYTGATCH). Residues 592–798 (NSIYEPSCEA…LRCQGDRNYW (207 aa)) enclose the Fibrinogen C-terminal domain. Residues Asn630 and Asn735 are each glycosylated (N-linked (GlcNAc...) asparagine). The region spanning 799–963 (NAASFPNPSS…KVTSGFISGC (165 aa)) is the Laminin G-like 3 domain. 4 disulfides stabilise this stretch: Cys936–Cys963, Cys967–Cys980, Cys974–Cys989, and Cys991–Cys1001. The region spanning 964 to 1002 (SGHCTSYGTNCENGGKCLERYHGYSCDCSNTAYDGTFCN) is the EGF-like 2 domain. In terms of domain architecture, Laminin G-like 4 spans 1023 to 1214 (ATNARDSSSR…IQGELVESNC (192 aa)). Residues Asn1116 and Asn1198 are each glycosylated (N-linked (GlcNAc...) asparagine). Residues Cys1178 and Cys1214 are joined by a disulfide bond. A helical membrane pass occupies residues 1263–1283 (IIGGVIAVVIFTILCTLVFLI). At 1284–1331 (RYMFRHKGTYHTNEAKGAESAESADAAIMNNDPNFTETIDESKKEWLI) the chain is on the cytoplasmic side. Phosphoserine is present on residues Ser1303 and Ser1306.

The protein belongs to the neurexin family. In terms of assembly, interacts (via C-terminus) with KCNA2.

It is found in the membrane. It localises to the cell projection. Its subcellular location is the axon. The protein localises to the cell junction. The protein resides in the paranodal septate junction. In terms of biological role, required for gap junction formation. Required, with CNTNAP1, for radial and longitudinal organization of myelinated axons. Plays a role in the formation of functional distinct domains critical for saltatory conduction of nerve impulses in myelinated nerve fibers. Demarcates the juxtaparanodal region of the axo-glial junction. The protein is Contactin-associated protein-like 2 (CNTNAP2) of Pongo abelii (Sumatran orangutan).